A 697-amino-acid chain; its full sequence is Pentatricopeptide repeat-containing protein 1, mitochondrial (697 aa).

The transit peptide at 1–36 (MLKRAHYVALHVTLNHNGLSYQRVFSCLTQFPMLRH) directs the protein to the mitochondrion. 2 PPR repeats span residues 257–288 (RPFTYRVLIESFMKFGNFEEAEKLAYSYVKNK) and 294–328 (SDVFFSAILKFYAVGGDFQGFKKLLSFMTDYNVNF).

The protein localises to the mitochondrion. Its function is as follows. Mitochondrial RNA-binding protein required for the stability of the cox2 and cox3 mRNAs. The polypeptide is Pentatricopeptide repeat-containing protein 1, mitochondrial (ppr1) (Schizosaccharomyces pombe (strain 972 / ATCC 24843) (Fission yeast)).